Here is a 428-residue protein sequence, read N- to C-terminus: Dihydroorotase (428 aa).

Positions 56 and 58 each coordinate Zn(2+). Residues 58–60 (HLR) and Asn90 contribute to the substrate site. The Zn(2+) site is built by Asp150, His177, and His230. Asn276 is a binding site for substrate. A Zn(2+)-binding site is contributed by Asp303. The active site involves Asp303. His307 contacts substrate.

This sequence belongs to the metallo-dependent hydrolases superfamily. DHOase family. Class I DHOase subfamily. The cofactor is Zn(2+).

It carries out the reaction (S)-dihydroorotate + H2O = N-carbamoyl-L-aspartate + H(+). The protein operates within pyrimidine metabolism; UMP biosynthesis via de novo pathway; (S)-dihydroorotate from bicarbonate: step 3/3. Functionally, catalyzes the reversible cyclization of carbamoyl aspartate to dihydroorotate. This Streptomyces coelicolor (strain ATCC BAA-471 / A3(2) / M145) protein is Dihydroorotase.